The following is a 292-amino-acid chain: Coatomer subunit epsilon (292 aa).

Belongs to the COPE family. As to quaternary structure, oligomeric complex that consists of at least the alpha, beta, beta', gamma, delta, epsilon and zeta subunits.

The protein resides in the cytoplasm. It is found in the golgi apparatus membrane. The protein localises to the cytoplasmic vesicle. It localises to the COPI-coated vesicle membrane. In terms of biological role, the coatomer is a cytosolic protein complex that binds to dilysine motifs and reversibly associates with Golgi non-clathrin-coated vesicles, which further mediate biosynthetic protein transport from the ER, via the Golgi up to the trans Golgi network. The coatomer complex is required for budding from Golgi membranes, and is essential for the retrograde Golgi-to-ER transport of dilysine-tagged proteins. The chain is Coatomer subunit epsilon (cope-1) from Caenorhabditis elegans.